Consider the following 583-residue polypeptide: MRRLLLAGILRRASSSPSSHHHLHLVRALSASSPLPASDADLRKYAGYALLLLGCGAATYYSFPLPPDALHKKAVPFKYAPLPDDLHAVSNWSATHEVHTRVLLQPDSLPVLHDALAAAHGERRKLRPLGSGLSPNGLALSRAGMVNLALMDKVLDVDAKKKTVTVQAGIRVAELVDTLREHGLTLQNFASIREQQVGGIIQVGAHGTGARLPPIDEQVISMKLVTPAKGTIELSREKDPDLFYLARCGLGGLGVVAEVTLQCVERHQLIEHTFVSSADEVKKNHKKWLSENKHIKYLWIPYTDTVVVVQCNPPSRWRTPKFTSKYGKDEAIQHVRDLYRESLKKYRTKAESNDPEVDQLSFTELRDRLLALDPLDKDHVIRINKAEAEYWKKSEGYRMGWSDEILGFDCGGQQWVSETCFPAGTLAKPNMKDLDYIEELLQLIEKEDIPAPAPIEQRWTACSRSPMSPASSSQEDDIFSWVGIIMYLPTSDARQRKEITEEFFNYRSKTQTNLWDGYSAYEHWAKIEVPKDKDELTELLARLRKRFPVDAYNKARMELDPNKVLSNAKLEKLFPVTEVQHVK.

The N-terminal 36 residues, 1-36 (MRRLLLAGILRRASSSPSSHHHLHLVRALSASSPLP), are a transit peptide targeting the mitochondrion. A propeptide spans 37 to 78 (ASDADLRKYAGYALLLLGCGAATYYSFPLPPDALHKKAVPFK) (removed in mature form). Residues 45–61 (YAGYALLLLGCGAATYY) form a helical membrane-spanning segment. The 172-residue stretch at 95 to 266 (THEVHTRVLL…AEVTLQCVER (172 aa)) folds into the FAD-binding PCMH-type domain.

The cofactor is FAD.

Its subcellular location is the mitochondrion membrane. It carries out the reaction L-galactono-1,4-lactone + 4 Fe(III)-[cytochrome c] = L-dehydroascorbate + 4 Fe(II)-[cytochrome c] + 5 H(+). The protein operates within cofactor biosynthesis; L-ascorbate biosynthesis. Involved in the biosynthesis of ascorbic acid. This is L-galactono-1,4-lactone dehydrogenase 2, mitochondrial (GLDH2) from Oryza sativa subsp. japonica (Rice).